The chain runs to 564 residues: Hexose transporter HXT17 (564 aa).

Residues 1 to 12 (MQSSTESDRDIQ) show a composition bias toward basic and acidic residues. Residues 1–22 (MQSSTESDRDIQDGPDADIHVA) form a disordered region. Residues 1 to 52 (MQSSTESDRDIQDGPDADIHVAPPVEKEWSDGFDDNEVINGDNVEPPKRGLI) are Cytoplasmic-facing. A helical membrane pass occupies residues 53–73 (GYLVIYLLCYPISFGGFLPGW). At 74–109 (DSGITAGFINMDNFKMNFGSYKHSTGEYYLSNVRMG) the chain is on the extracellular side. A helical transmembrane segment spans residues 110–130 (LLVAMFSIGCAIGGLIFARLA). Over 131–136 (DTLGRR) the chain is Cytoplasmic. The helical transmembrane segment at 137-157 (LAIVIVVLVYMVGAIIQISSN) threads the bilayer. Residues 158 to 167 (HKWYQYFVGK) are Extracellular-facing. A helical membrane pass occupies residues 168-188 (IIYGLGAGGCSVLCPMLLSEI). Over 189–194 (APTDLR) the chain is Cytoplasmic. A helical membrane pass occupies residues 195–215 (GGLVSLYQLNMTFGIFLGYCS). At 216-229 (VYGTRKYDNTAQWR) the chain is on the extracellular side. The chain crosses the membrane as a helical span at residues 230–250 (VPLGLCFLWTLIIIIGMLLVP). Residues 251 to 333 (ESPRYLIECE…VQTFLQLTGE (83 aa)) are Cytoplasmic-facing. Residues 334–350 (NYFFFYGTTIFKSVGLT) form a helical membrane-spanning segment. Topologically, residues 351–356 (DGFETS) are extracellular. The chain crosses the membrane as a helical span at residues 357–374 (IVLGTVNFFSTIIAVMVV). Topologically, residues 375 to 381 (DKIGRRK) are cytoplasmic. The helical transmembrane segment at 382 to 402 (CLLFGAAGMMACMVIFASIGV) threads the bilayer. Residues 403-424 (KCLYPHGQDGPSSKGAGNAMIV) are Extracellular-facing. A helical membrane pass occupies residues 425–445 (FTCFYIFCFATTWAPVAYIVV). Topologically, residues 446 to 462 (AESFPSKVKSRAMSIST) are cytoplasmic. The chain crosses the membrane as a helical span at residues 463-483 (ACNWLWQFLIGFFTPFITGSI). H484 is a topological domain (extracellular). The helical transmembrane segment at 485 to 505 (FYYGYVFVGCLVAMFLYVFFF) threads the bilayer. The Cytoplasmic segment spans residues 506–564 (LPETIGLSLEEIQLLYEEGIKPWKSASWVPPSRRGIPSEESKTEKKDWKKFLKFSKGSD).

The protein belongs to the major facilitator superfamily. Sugar transporter (TC 2.A.1.1) family.

The protein localises to the membrane. Functionally, probable glucose transporter. This is Hexose transporter HXT17 (HXT17) from Saccharomyces cerevisiae (strain ATCC 204508 / S288c) (Baker's yeast).